The chain runs to 763 residues: C6 finger domain transcription factor hasF (763 aa).

Residues M1–S20 show a composition bias toward low complexity. The segment at M1–K25 is disordered. Positions C34–C61 form a DNA-binding region, zn(2)-C6 fungal-type. 3 disordered regions span residues P68 to Q91, G112 to E145, and D189 to T219. The span at S80–S89 shows a compositional bias: polar residues. A compositionally biased stretch (pro residues) spans D197–P209.

It is found in the nucleus. Functionally, transcription factor; part of the gene cluster that mediates the biosynthesis of hexadehydro-astechrome (HAS), a tryptophan-derived iron(III)-complex that acts as a virulence factor in infected mice. Does not regulate the expression of the HAS biosynthetic genes (at least under the growth conditions tested). This chain is C6 finger domain transcription factor hasF, found in Aspergillus fumigatus (strain CBS 144.89 / FGSC A1163 / CEA10) (Neosartorya fumigata).